Reading from the N-terminus, the 100-residue chain is uncharacterized protein (100 aa).

A coiled-coil region spans residues 65–96 (PELSKNWEKLKKEIEQKHKEIQELISEFDNMF).

This is an uncharacterized protein from Acidianus filamentous virus 2 (isolate Italy/Pozzuoli) (AFV-2).